We begin with the raw amino-acid sequence, 370 residues long: uncharacterized protein (370 aa).

Residues M1–S27 form the signal peptide. Residues N59, N98, and N126 are each glycosylated (N-linked (GlcNAc...) asparagine). 2 disordered regions span residues S81–A101 and L123–P167. The segment covering H139–E148 has biased composition (acidic residues). 4 N-linked (GlcNAc...) asparagine glycosylation sites follow: N171, N221, N230, and N262.

This is an uncharacterized protein from Saccharomyces cerevisiae (strain ATCC 204508 / S288c) (Baker's yeast).